We begin with the raw amino-acid sequence, 86 residues long: Small ribosomal subunit protein uS17 (86 aa).

Belongs to the universal ribosomal protein uS17 family. In terms of assembly, part of the 30S ribosomal subunit.

Its function is as follows. One of the primary rRNA binding proteins, it binds specifically to the 5'-end of 16S ribosomal RNA. In Caldicellulosiruptor bescii (strain ATCC BAA-1888 / DSM 6725 / KCTC 15123 / Z-1320) (Anaerocellum thermophilum), this protein is Small ribosomal subunit protein uS17.